A 403-amino-acid polypeptide reads, in one-letter code: Alkaline protease 1 (403 aa).

A signal peptide spans 1 to 21; it reads MQSIKRTLLLLGAILPAVLGA. Residues 22 to 125 constitute a propeptide that is removed on maturation; sequence PVQETRRAAE…QIYYLDGLTT (104 aa). Residues 36–120 form the Inhibitor I9 domain; the sequence is KYIVTFKPGI…YVEEDQIYYL (85 aa). Residues 130 to 403 form the Peptidase S8 domain; the sequence is PWGLGSISHK…PNLLAYNGNA (274 aa). Active-site charge relay system residues include D162 and H193. The N-linked (GlcNAc...) asparagine glycan is linked to N253. S349 serves as the catalytic Charge relay system.

The protein belongs to the peptidase S8 family.

The protein resides in the secreted. The catalysed reaction is Hydrolysis of proteins with broad specificity, and of Bz-Arg-OEt &gt; Ac-Tyr-OEt. Does not hydrolyze peptide amides.. Secreted alkaline protease that allows assimilation of proteinaceous substrates. This is Alkaline protease 1 (alp1) from Aspergillus flavus (strain ATCC 200026 / FGSC A1120 / IAM 13836 / NRRL 3357 / JCM 12722 / SRRC 167).